Consider the following 1694-residue polypeptide: Protein TOPAZ1 (1694 aa).

4 disordered regions span residues M1–D135, E322–D341, E600–K629, and I891–D920. Residues G31 to A40 are compositionally biased toward gly residues. The span at S95–T116 shows a compositional bias: basic and acidic residues. Positions R603–G627 are enriched in polar residues. Positions Q903 to D920 are enriched in basic and acidic residues.

It localises to the cytoplasm. It is found in the cytosol. Its function is as follows. Important for normal spermatogenesis and male fertility. Specifically required for progression to the post-meiotic stages of spermatocyte development. Seems to be necessary for normal expression levels of a number of testis-expressed gene transcripts, although its role in this process is unclear. In Gorilla gorilla gorilla (Western lowland gorilla), this protein is Protein TOPAZ1 (TOPAZ1).